The sequence spans 1411 residues: DNA-directed RNA polymerase subunit beta' (1411 aa).

Residues Cys-69, Cys-71, Cys-84, and Cys-87 each coordinate Zn(2+). Mg(2+) contacts are provided by Asp-461, Asp-463, and Asp-465. Residues Cys-809, Cys-883, Cys-890, and Cys-893 each contribute to the Zn(2+) site.

It belongs to the RNA polymerase beta' chain family. In terms of assembly, the RNAP catalytic core consists of 2 alpha, 1 beta, 1 beta' and 1 omega subunit. When a sigma factor is associated with the core the holoenzyme is formed, which can initiate transcription. Requires Mg(2+) as cofactor. It depends on Zn(2+) as a cofactor.

It carries out the reaction RNA(n) + a ribonucleoside 5'-triphosphate = RNA(n+1) + diphosphate. Its function is as follows. DNA-dependent RNA polymerase catalyzes the transcription of DNA into RNA using the four ribonucleoside triphosphates as substrates. This chain is DNA-directed RNA polymerase subunit beta', found in Ehrlichia ruminantium (strain Gardel).